The chain runs to 380 residues: Tomoregulin-1 (380 aa).

The first 39 residues, 1–39, serve as a signal peptide directing secretion; it reads MGAAAAEAPLRLPAAPPLAFCCYTSVLLLFAFSLPGSRA. Residues 40–330 lie on the Extracellular side of the membrane; sequence SNQPPGGGGG…VPSRQKLTHV (291 aa). Kazal-like domains are found at residues 98–145 and 189–237; these read ACQF…PCYS and VCNI…HCTD. 9 disulfides stabilise this stretch: Cys99–Cys129, Cys103–Cys122, Cys111–Cys143, Cys190–Cys221, Cys194–Cys214, Cys203–Cys235, Cys275–Cys288, Cys283–Cys299, and Cys301–Cys310. The region spanning 271 to 311 is the EGF-like domain; sequence NHMPCPENLNGYCIHGKCEFIYSTQKASCRCESGYTGQHCE. A helical membrane pass occupies residues 331–351; sequence LIAAIIGAVQIAIIVAIVMCI. Residues 352–380 are Cytoplasmic-facing; sequence TRKCPKNNRGRRQKQNLGHFTSDTSSRMV. A disordered region spans residues 359–380; sequence NRGRRQKQNLGHFTSDTSSRMV. A compositionally biased stretch (polar residues) spans 366–380; sequence QNLGHFTSDTSSRMV.

This sequence belongs to the tomoregulin family. May interact with ST14. Expressed predominantly in brain, and at lower levels in heart, placenta and skeletal muscle. Down-regulated in brain tumors as compared to control brain tissues.

The protein localises to the cell membrane. Its function is as follows. Neuron-specific restriction factor that prevents herpes simplex virus 1 (HHV-1) infection in the brain by blocking viral entry. Also able to restrict herpes simplex virus 2 (HHV-2) infection, although to a lesser extent. Acts by preventing the association between the viral glycoprotein D (gD) and its cell surface receptor NECTIN1, thereby inhibiting fusion of the virus and the cell membrane. Also able to prevent the association between the viral glycoprotein B (gB) and MYH9/NMMHC-IIA and MYH10/NMMHC-IIB receptors. May be a tumor suppressor in brain cancers. The chain is Tomoregulin-1 from Homo sapiens (Human).